Consider the following 395-residue polypeptide: Methylthioribose-1-phosphate isomerase (395 aa).

Asp-258 functions as the Proton donor in the catalytic mechanism.

It belongs to the eIF-2B alpha/beta/delta subunits family. MtnA subfamily.

The protein localises to the cytoplasm. The protein resides in the nucleus. The catalysed reaction is 5-(methylsulfanyl)-alpha-D-ribose 1-phosphate = 5-(methylsulfanyl)-D-ribulose 1-phosphate. It participates in amino-acid biosynthesis; L-methionine biosynthesis via salvage pathway; L-methionine from S-methyl-5-thio-alpha-D-ribose 1-phosphate: step 1/6. Catalyzes the interconversion of methylthioribose-1-phosphate (MTR-1-P) into methylthioribulose-1-phosphate (MTRu-1-P). The chain is Methylthioribose-1-phosphate isomerase from Podospora anserina (strain S / ATCC MYA-4624 / DSM 980 / FGSC 10383) (Pleurage anserina).